The primary structure comprises 183 residues: 2-epi-5-epi-valiolone epimerase (183 aa).

The 145-residue stretch at 11 to 155 folds into the VOC domain; that stretch reads AVHHVAYTVP…WGMQLELINL (145 aa). Residues His-14, Glu-76, His-99, and Glu-151 each coordinate a divalent metal cation.

Homodimer. A divalent metal cation serves as cofactor.

It carries out the reaction 2-epi-5-epi-valiolone = 5-epi-valiolone. It participates in antibiotic biosynthesis. In terms of biological role, catalyzes the epimerization of 2-epi-5-epi-valiolone to 5-epi-valiolone. Involved in cetoniacytone A biosynthesis. This Actinomyces sp protein is 2-epi-5-epi-valiolone epimerase.